The chain runs to 153 residues: Probable Brix domain-containing ribosomal biogenesis protein (153 aa).

Residues methionine 1–arginine 153 enclose the Brix domain.

Probably involved in the biogenesis of the ribosome. The chain is Probable Brix domain-containing ribosomal biogenesis protein from Archaeoglobus fulgidus (strain ATCC 49558 / DSM 4304 / JCM 9628 / NBRC 100126 / VC-16).